The primary structure comprises 732 residues: Small conductance calcium-activated potassium channel protein 3 (732 aa).

The span at 1-11 (MDTSGHFHDSG) shows a compositional bias: basic and acidic residues. 2 disordered regions span residues 1–82 (MDTS…QQAP) and 103–162 (HSSP…ASPL). Residues 35–59 (QPPPPSAPPAVPQQPPGPLLQPQPP) are compositionally biased toward pro residues. The span at 60-82 (QLQQQQQQQQQQQQQQQQQQQAP) shows a compositional bias: low complexity. The segment covering 113–133 (NSANSTAILHPSSRQGSQLNL) has biased composition (polar residues). Residues 139–148 (GHSPSSTATS) are compositionally biased toward low complexity. Ser-168 carries the phosphoserine modification. The segment covering 241–257 (THNHQHAGTTAGSTTFP) has biased composition (polar residues). The disordered stretch occupies residues 241–260 (THNHQHAGTTAGSTTFPKAN). The chain crosses the membrane as a helical span at residues 289–309 (LIFGMFGIVVMVIETELSWGL). Residues 316 to 336 (FSLALKCLISLSTIILLGLII) traverse the membrane as a helical segment. The chain crosses the membrane as a helical span at residues 367-387 (ISLEMLVCAIHPIPGEYKFFW). A helical transmembrane segment spans residues 406 to 426 (IILSIPMFLRLYLIARVMLLH). A helical membrane pass occupies residues 455–475 (LMTICPGTVLLVFSISLWIIA). The pore-forming intramembrane region spans 495–515 (FLGAMWLISITFLSIGYGDMV). The chain crosses the membrane as a helical span at residues 524–544 (VCLLTGIMGAGCTALVVAVVA). The segment at 562-638 (DTQLTKRIKN…LVDLSKMQNV (77 aa)) is calmodulin-binding. The stretch at 643-670 (ITELNDRSEDLEKQIGSLESKLEHLTAS) forms a coiled coil. Residues 704-732 (GTSHAPPSDSPIGISSTSFPTPYTSSSSC) are disordered. Residues 718 to 732 (SSTSFPTPYTSSSSC) show a composition bias toward low complexity.

Belongs to the potassium channel KCNN family. KCa2.3/KCNN3 subfamily. Homodimer. Heteromultimer with KCNN2 or KCNN1; this modulates plasma membrane expression and consequently the small conductance calcium-activated potassium channel activity. The complex is composed of 4 channel subunits each of which binds to a calmodulin subunit which regulates the channel activity through calcium-binding. Interacts with CALM1.

The protein localises to the cell membrane. It localises to the cytoplasm. The protein resides in the myofibril. It is found in the sarcomere. Its subcellular location is the z line. It carries out the reaction K(+)(in) = K(+)(out). With respect to regulation, inhibited by bee venom neurotoxin apamin. In terms of biological role, small conductance calcium-activated potassium channel that mediates the voltage-independent transmembrane transfer of potassium across the cell membrane through a constitutive interaction with calmodulin which binds the intracellular calcium allowing its opening. The current is characterized by a voltage-independent activation, an intracellular calcium concentration increase-dependent activation and a single-channel conductance of 10 picosiemens. Also presents an inwardly rectifying current, thus reducing its already small outward conductance of potassium ions, which is particularly the case when the membrane potential displays positive values, above + 20 mV. Activation is followed by membrane hyperpolarization. Thought to regulate neuronal excitability by contributing to the slow component of synaptic afterhyperpolarization. In Rattus norvegicus (Rat), this protein is Small conductance calcium-activated potassium channel protein 3.